The chain runs to 336 residues: Dual specificity mitogen-activated protein kinase kinase sek-1 (336 aa).

Positions 50–311 constitute a Protein kinase domain; the sequence is LVVLEELGKG…YPELLAMPFM (262 aa). ATP is bound by residues 56–64 and Lys79; that span reads LGKGGYGIV. Catalysis depends on Asp176, which acts as the Proton acceptor. Phosphoserine is present on Ser204. Thr208 carries the post-translational modification Phosphothreonine.

The protein belongs to the protein kinase superfamily. STE Ser/Thr protein kinase family. MAP kinase kinase subfamily. Interacts with nsy-1. Interacts with unc-16. The cofactor is Mg(2+). In terms of tissue distribution, expressed in linker cell in males.

The catalysed reaction is L-seryl-[protein] + ATP = O-phospho-L-seryl-[protein] + ADP + H(+). It catalyses the reaction L-threonyl-[protein] + ATP = O-phospho-L-threonyl-[protein] + ADP + H(+). It carries out the reaction L-tyrosyl-[protein] + ATP = O-phospho-L-tyrosyl-[protein] + ADP + H(+). With respect to regulation, activated by nsy-1-mediated phosphorylation. In terms of biological role, dual specificity protein kinase which acts as an essential component of the p38 signal transduction pathway which is also composed of upstream effector nsy-1 and downstream effector pmk-1. May phosphorylate pmk-1. Downstream of CaMKII unc-43 and adapter protein tir-1, plays a role in determining asymmetric cell fates in olfactory AWC neurons during neuronal development. Activation results in the repression of odorant receptor str-2 expression in one of the 2 AWC neurons. Involved in resistance to pathogenic Gram-positive and Gram-negative bacterial and fungal infection. Involved in resistance to the nematotoxic C.cinerea galectin Cgl2. Probably by promoting pmk-1-mediated activation of skn-1, involved in the up-regulation of gcs-1 and glutathione-S-transferase gst-4 expression upon bacterial infection. Probably downstream of tir-1, required for the expression of antimicrobial peptide nlp-29 in the epidermis in response to fungal infection or physical injury. Regulates susceptibility of B.thuringiensis pore-forming toxin Cry5B and Cry21A. Involved in the response to oxidative stress. May regulate transcription factor daf-16 localization during oxidative stress. By phosphorylating pmk-1, regulates skn-1 localization during oxidative stress. By phosphorylating and activating pmk-1, plays a role in the stabilization of transcription factor rnt-1 in the intestine during oxidative stress. Up-regulates expression of gcs-1 in intestine upon arsenite treatment. Regulates germline proliferation in response to osmotic stress, starvation and germline apoptosis induced by heavy metals, such as Cu(2+). In association with mek-1, regulates germline cell apoptosis in response to oxidative, osmotic and heat shock stresses. Plays a role downstream of tir-1/nsy-1 in regulating susceptibility to anoxia. In males, by regulating pqn-41 expression, involved in non-apoptotic death of the linker cell which guides gonad elongation during larval development. Involved in egg laying. The chain is Dual specificity mitogen-activated protein kinase kinase sek-1 from Caenorhabditis elegans.